The primary structure comprises 167 residues: MPRSQRNDNFIDKTFTVIADILLKVLPTSNREKQAFTYYREGMSAQSEGEYAEALQNYYEAMRLEVDAYDRSYIFYNIGLIHTSNGEHARALEYYYQALERNPSLPQALNNIAVIYHYRGEQAIENGQAEISKMLFDKAADYWKEAIRLAPTNYIEAQNWLKMTARE.

TPR repeat units lie at residues 35-68, 72-105, and 120-153; these read AFTYYREGMSAQSEGEYAEALQNYYEAMRLEVDA, SYIFYNIGLIHTSNGEHARALEYYYQALERNPSL, and GEQAIENGQAEISKMLFDKAADYWKEAIRLAPTN.

It belongs to the Ycf3 family.

The protein localises to the plastid. It localises to the chloroplast thylakoid membrane. Its function is as follows. Essential for the assembly of the photosystem I (PSI) complex. May act as a chaperone-like factor to guide the assembly of the PSI subunits. This Pleurastrum terricola (Filamentous green alga) protein is Photosystem I assembly protein Ycf3.